The following is a 210-amino-acid chain: Interleukin-6 (210 aa).

A signal peptide spans 1–25 (MNSLSTSAFSPVAFSLGLLLVMATA). C72 and C78 are joined by a disulfide. The residue at position 81 (S81) is a Phosphoserine. An intrachain disulfide couples C101 to C111.

The protein belongs to the IL-6 superfamily. Component of a hexamer of two molecules each of IL6, IL6R and IL6ST; first binds to IL6R to associate with the signaling subunit IL6ST. Interacts with IL6R (via the N-terminal ectodomain); this interaction may be affected by IL6R-binding with SORL1, hence decreasing IL6 cis signaling. Interacts with SORL1 (via the N-terminal ectodomain); this interaction leads to IL6 internalization and lysosomal degradation. May form a trimeric complex with the soluble SORL1 ectodomain and soluble IL6R receptor; this interaction might stabilize circulating IL6, hence promoting IL6 trans signaling.

It is found in the secreted. In terms of biological role, cytokine with a wide variety of biological functions in immunity, tissue regeneration, and metabolism. Binds to IL6R, then the complex associates to the signaling subunit IL6ST/gp130 to trigger the intracellular IL6-signaling pathway. The interaction with the membrane-bound IL6R and IL6ST stimulates 'classic signaling', whereas the binding of IL6 and soluble IL6R to IL6ST stimulates 'trans-signaling'. Alternatively, 'cluster signaling' occurs when membrane-bound IL6:IL6R complexes on transmitter cells activate IL6ST receptors on neighboring receiver cells. Functionally, IL6 is a potent inducer of the acute phase response. Rapid production of IL6 contributes to host defense during infection and tissue injury, but excessive IL6 synthesis is involved in disease pathology. In the innate immune response, is synthesized by myeloid cells, such as macrophages and dendritic cells, upon recognition of pathogens through toll-like receptors (TLRs) at the site of infection or tissue injury. In the adaptive immune response, is required for the differentiation of B cells into immunoglobulin-secreting cells. Plays a major role in the differentiation of CD4(+) T cell subsets. Essential factor for the development of T follicular helper (Tfh) cells that are required for the induction of germinal-center formation. Required to drive naive CD4(+) T cells to the Th17 lineage. Also required for proliferation of myeloma cells and the survival of plasmablast cells. Its function is as follows. Acts as an essential factor in bone homeostasis and on vessels directly or indirectly by induction of VEGF, resulting in increased angiogenesis activity and vascular permeability. Induces, through 'trans-signaling' and synergistically with IL1B and TNF, the production of VEGF. Involved in metabolic controls, is discharged into the bloodstream after muscle contraction increasing lipolysis and improving insulin resistance. 'Trans-signaling' in central nervous system also regulates energy and glucose homeostasis. Mediates, through GLP-1, crosstalk between insulin-sensitive tissues, intestinal L cells and pancreatic islets to adapt to changes in insulin demand. Also acts as a myokine. Plays a protective role during liver injury, being required for maintenance of tissue regeneration. Also has a pivotal role in iron metabolism by regulating HAMP/hepcidin expression upon inflammation or bacterial infection. Through activation of IL6ST-YAP-NOTCH pathway, induces inflammation-induced epithelial regeneration. The sequence is that of Interleukin-6 (IL6) from Mustela putorius furo (European domestic ferret).